A 229-amino-acid chain; its full sequence is Prolactin (229 aa).

The N-terminal stretch at 1-30 (MDSKGSAQKGSRLLLLLVVSNLLLCQGVVS) is a signal peptide. Residues cysteine 34 and cysteine 41 are joined by a disulfide bond. Serine 56 is subject to Phosphoserine. Asparagine 61 is a glycosylation site (N-linked (GlcNAc...) asparagine; partial). Serine 64 and serine 120 each carry phosphoserine. 2 disulfide bridges follow: cysteine 88–cysteine 204 and cysteine 221–cysteine 229.

Belongs to the somatotropin/prolactin family. As to quaternary structure, interacts with PRLR.

It is found in the secreted. Functionally, prolactin acts primarily on the mammary gland by promoting lactation, mammogenesis, mitogenesis and osmoregulation. This chain is Prolactin (PRL), found in Ovis aries (Sheep).